The sequence spans 549 residues: OBERON-like protein (549 aa).

Residues 1–56 (MLPPRQQPRPGGLQTSLSLVSPDACGSPNPQERGSTSDQARDSPSESASSRETWPT) form a disordered region. Composition is skewed to polar residues over residues 28–38 (PNPQERGSTSD) and 45–56 (SESASSRETWPT). The PHD-type zinc-finger motif lies at 224–288 (LCMCVICYKF…LFRCHACSRT (65 aa)). The stretch at 394–520 (VQEAIRKMEA…YLFEKIKLQE (127 aa)) forms a coiled coil. Positions 519–549 (QESSRASQSSAGGNDPSQMMYSKIQDLIKNM) are disordered. Residues 521-538 (SSRASQSSAGGNDPSQMM) show a composition bias toward polar residues.

In terms of assembly, self-interacts and probably forms heteromers. Binds to VPg of pea seed borne mosaic virus (PSbMV), turnip mosaic virus (TuMV) and lettuce mosaic virus (LMV), but not with VPg of tobacco etch virus (TEV), cowpea mosaic virus (CPMV), tomato black ring virus (TBRV) and grapevine fan leaf virus (GFLV).

It is found in the nucleus. Required for the maintenance and/or establishment of both the shoot and root meristems, probably by controlling the expression of the meristem genes and of genes required for auxin responses. Involved in the development of the basal pole and in auxin-mediated root and vascular development in the embryo. Confers sensitivity to turnip mosaic virus (TuMV) probably by promoting viral movement and multiplication via interaction with TuMV VPg. The chain is OBERON-like protein (PVIP) from Nicotiana benthamiana.